The following is a 46-amino-acid chain: Denclatoxin-B (46 aa).

Disulfide bonds link cysteine 3–cysteine 40, cysteine 4–cysteine 32, and cysteine 16–cysteine 26.

It belongs to the plant thionin (TC 1.C.44) family.

Its subcellular location is the secreted. Its function is as follows. Thionins are small plant proteins which are toxic to animal cells. They seem to exert their toxic effect at the level of the cell membrane. Their precise function is not known. The sequence is that of Denclatoxin-B from Dendrophthora clavata (Columbian mistletoe).